A 304-amino-acid chain; its full sequence is Acetaldehyde dehydrogenase (304 aa).

Cys131 (acyl-thioester intermediate) is an active-site residue. Residues 162–170 (SAGPGTRKN) and Asn273 each bind NAD(+).

This sequence belongs to the acetaldehyde dehydrogenase family.

The catalysed reaction is acetaldehyde + NAD(+) + CoA = acetyl-CoA + NADH + H(+). This chain is Acetaldehyde dehydrogenase, found in Polaromonas naphthalenivorans (strain CJ2).